The chain runs to 554 residues: MPEPFNSTMPLPSPPNAQPKDEKVGLQDSNQPPEMSASSEKKHPENENRQSQQNLRPTESENNEPYSVHSSSAKKLMVLAASLAGFFSPLSASIYYPALPAIEKALNVSSTQVNLTVTTYLILQGLAPMVTASFSDSAGRRPGYAICFIVYLAANLGLALQNSYAALMVLRALQSAGSSGAIAIANGVVSDIITPQERGSYIAFASVGSILGPSLSPIIGGLFAEYTDWHWIFWFLLIFSGAFCVPFFLFFPETCRKIVGNGKGVPPFWNRNLPDILRARKEKQRQQRAENEEENANRQRSRLSIPNPLKVFVVFTNLQTVMTLCPAGVAFGSYYAVLTGASGEFTRVYHFSEIKVALIFLPMGVGGLISALSTGKLVNWNFHRHARKRGIMVARNRRQELLNFPIERARLEIALPVFCLGCVCTVLYGWLMTQDVNVSGPIILLFVMSWSFAAFYQVLNVLLVDTYPGRGAMVTAVVNLLRCEIGAGMAAMISPLTSATGSGWSYTIIALIGVAATSPLLLTMKYGMKWRQESAAKAEEKKSRMQEAQQRQEV.

2 stretches are compositionally biased toward polar residues: residues 1–10 and 27–38; these read MPEPFNSTMP and QDSNQPPEMSAS. The disordered stretch occupies residues 1–68; sequence MPEPFNSTMP…ESENNEPYSV (68 aa). N-linked (GlcNAc...) asparagine glycosylation is present at asparagine 6. Residues 39 to 48 show a composition bias toward basic and acidic residues; it reads SEKKHPENEN. The helical transmembrane segment at 76-96 threads the bilayer; sequence LMVLAASLAGFFSPLSASIYY. N-linked (GlcNAc...) asparagine glycans are attached at residues asparagine 107 and asparagine 114. 5 helical membrane passes run 115–135, 142–162, 173–193, 202–222, and 231–251; these read LTVT…ASFS, PGYA…ALQN, LQSA…SDII, IAFA…IGGL, and WIFW…FLFF. Residues 281-300 are disordered; it reads KEKQRQQRAENEEENANRQR. A run of 3 helical transmembrane segments spans residues 311 to 331, 354 to 374, and 413 to 433; these read VFVV…GVAF, IKVA…ALST, and IALP…WLMT. Asparagine 437 is a glycosylation site (N-linked (GlcNAc...) asparagine). Helical transmembrane passes span 442–462, 473–493, and 504–524; these read IILL…LNVL, MVTA…AAMI, and WSYT…LLTM.

Belongs to the major facilitator superfamily.

It is found in the membrane. In terms of biological role, MFS-type transporter; part of the gene cluster that mediates the biosynthesis of the antihypercholesterolemic agents phomoidrides which are dimeric anhydrides. The chain is MFS-type transporter tstD from Talaromyces stipitatus (strain ATCC 10500 / CBS 375.48 / QM 6759 / NRRL 1006) (Penicillium stipitatum).